A 127-amino-acid chain; its full sequence is Modulator protein MzrA (127 aa).

Topologically, residues 1–10 (MVISPLALRR) are cytoplasmic. Residues 11-31 (LSYGLIALVLLSALILVWTAL) traverse the membrane as a helical segment. Residues 32-127 (QRQESTLAIR…RLRDTSHRFG (96 aa)) are Periplasmic-facing.

This sequence belongs to the MzrA family. As to quaternary structure, interacts with EnvZ.

The protein localises to the cell inner membrane. In terms of biological role, modulates the activity of the EnvZ/OmpR two-component regulatory system, probably by directly modulating EnvZ enzymatic activity and increasing stability of phosphorylated OmpR. In Enterobacter sp. (strain 638), this protein is Modulator protein MzrA.